A 431-amino-acid polypeptide reads, in one-letter code: 5-methylthioadenosine/S-adenosylhomocysteine deaminase (431 aa).

Zn(2+) contacts are provided by His-66 and His-68. 3 residues coordinate substrate: Glu-95, Arg-147, and His-185. His-212 contributes to the Zn(2+) binding site. Glu-215 and Asp-300 together coordinate substrate. Asp-300 contacts Zn(2+).

The protein belongs to the metallo-dependent hydrolases superfamily. MTA/SAH deaminase family. It depends on Zn(2+) as a cofactor.

It carries out the reaction S-adenosyl-L-homocysteine + H2O + H(+) = S-inosyl-L-homocysteine + NH4(+). The catalysed reaction is S-methyl-5'-thioadenosine + H2O + H(+) = S-methyl-5'-thioinosine + NH4(+). Its function is as follows. Catalyzes the deamination of 5-methylthioadenosine and S-adenosyl-L-homocysteine into 5-methylthioinosine and S-inosyl-L-homocysteine, respectively. Is also able to deaminate adenosine. In Desulfitobacterium hafniense (strain DSM 10664 / DCB-2), this protein is 5-methylthioadenosine/S-adenosylhomocysteine deaminase.